The primary structure comprises 45 residues: DNA-directed RNA polymerase subunit Rpo12 (45 aa).

Cysteine 8, cysteine 23, and cysteine 26 together coordinate Zn(2+).

The protein belongs to the archaeal Rpo12/eukaryotic RPC10 RNA polymerase subunit family. Part of the RNA polymerase complex. The cofactor is Zn(2+).

The protein localises to the cytoplasm. It catalyses the reaction RNA(n) + a ribonucleoside 5'-triphosphate = RNA(n+1) + diphosphate. DNA-dependent RNA polymerase (RNAP) catalyzes the transcription of DNA into RNA using the four ribonucleoside triphosphates as substrates. This chain is DNA-directed RNA polymerase subunit Rpo12, found in Methanosarcina acetivorans (strain ATCC 35395 / DSM 2834 / JCM 12185 / C2A).